A 545-amino-acid polypeptide reads, in one-letter code: Eukaryotic translation initiation factor 3 subunit D-2 (545 aa).

Residues 94 to 148 (FQRGRFRGNTRNNPRTRGRTGRGGAVTGTGGNQPGVGVNERTKYGKGRDNRRQMG) are disordered. The span at 95-113 (QRGRFRGNTRNNPRTRGRT) shows a compositional bias: basic residues. Gly residues predominate over residues 114–127 (GRGGAVTGTGGNQP). The segment covering 133–145 (ERTKYGKGRDNRR) has biased composition (basic and acidic residues). Residues 287 to 301 (QFDLLTVNETALEPP) form an RNA gate region.

Belongs to the eIF-3 subunit D family. In terms of assembly, component of the eukaryotic translation initiation factor 3 (eIF-3) complex. The eIF-3 complex interacts with pix.

The protein resides in the cytoplasm. MRNA cap-binding component of the eukaryotic translation initiation factor 3 (eIF-3) complex, which is involved in protein synthesis of a specialized repertoire of mRNAs and, together with other initiation factors, stimulates binding of mRNA and methionyl-tRNAi to the 40S ribosome. The eIF-3 complex specifically targets and initiates translation of a subset of mRNAs involved in cell proliferation. In the eIF-3 complex, eif3d specifically recognizes and binds the 7-methylguanosine cap of a subset of mRNAs. This chain is Eukaryotic translation initiation factor 3 subunit D-2, found in Drosophila pseudoobscura pseudoobscura (Fruit fly).